The chain runs to 428 residues: 3-phosphoshikimate 1-carboxyvinyltransferase (428 aa).

Lys21, Ser22, and Arg26 together coordinate 3-phosphoshikimate. Position 21 (Lys21) interacts with phosphoenolpyruvate. Phosphoenolpyruvate contacts are provided by Gly91 and Arg119. Residues Ser164, Gln166, Asp313, and Lys340 each coordinate 3-phosphoshikimate. Position 166 (Gln166) interacts with phosphoenolpyruvate. Catalysis depends on Asp313, which acts as the Proton acceptor. Residues Arg344 and Arg386 each coordinate phosphoenolpyruvate.

It belongs to the EPSP synthase family. As to quaternary structure, monomer.

The protein resides in the cytoplasm. It catalyses the reaction 3-phosphoshikimate + phosphoenolpyruvate = 5-O-(1-carboxyvinyl)-3-phosphoshikimate + phosphate. It functions in the pathway metabolic intermediate biosynthesis; chorismate biosynthesis; chorismate from D-erythrose 4-phosphate and phosphoenolpyruvate: step 6/7. Functionally, catalyzes the transfer of the enolpyruvyl moiety of phosphoenolpyruvate (PEP) to the 5-hydroxyl of shikimate-3-phosphate (S3P) to produce enolpyruvyl shikimate-3-phosphate and inorganic phosphate. This chain is 3-phosphoshikimate 1-carboxyvinyltransferase, found in Campylobacter jejuni subsp. doylei (strain ATCC BAA-1458 / RM4099 / 269.97).